Reading from the N-terminus, the 335-residue chain is 4-hydroxythreonine-4-phosphate dehydrogenase (335 aa).

Position 132 (threonine 132) interacts with substrate. 3 residues coordinate a divalent metal cation: histidine 163, histidine 208, and histidine 263. Substrate-binding residues include lysine 271, asparagine 280, and arginine 289.

Belongs to the PdxA family. As to quaternary structure, homodimer. Requires Zn(2+) as cofactor. Mg(2+) serves as cofactor. It depends on Co(2+) as a cofactor.

The protein resides in the cytoplasm. It catalyses the reaction 4-(phosphooxy)-L-threonine + NAD(+) = 3-amino-2-oxopropyl phosphate + CO2 + NADH. It participates in cofactor biosynthesis; pyridoxine 5'-phosphate biosynthesis; pyridoxine 5'-phosphate from D-erythrose 4-phosphate: step 4/5. Catalyzes the NAD(P)-dependent oxidation of 4-(phosphooxy)-L-threonine (HTP) into 2-amino-3-oxo-4-(phosphooxy)butyric acid which spontaneously decarboxylates to form 3-amino-2-oxopropyl phosphate (AHAP). The protein is 4-hydroxythreonine-4-phosphate dehydrogenase of Zymomonas mobilis subsp. mobilis (strain ATCC 31821 / ZM4 / CP4).